We begin with the raw amino-acid sequence, 434 residues long: Evolutionarily conserved signaling intermediate in Toll pathway, mitochondrial (434 aa).

The transit peptide at 1 to 48 (MSWVQVNLLARGLSRGWGSICRTVLSGTPFAQPSLQARGLHCSAVTHK) directs the protein to the mitochondrion. Residue lysine 371 forms a Glycyl lysine isopeptide (Lys-Gly) (interchain with G-Cter in ubiquitin) linkage. The segment at 403–434 (TRLEGQSPPHSPPKGPEEDDEAIQAQQRQGQS) is disordered.

This sequence belongs to the ECSIT family. As to quaternary structure, interacts with MAP3K1, SMAD4 and TRAF6. Interacts with SMAD1 only after BMP4-treatment. Part of the mitochondrial complex I assembly/MCIA complex that comprises at least the core subunits TMEM126B, NDUFAF1, ECSIT and ACAD9 and complement subunits such as COA1 and TMEM186. Interacts with NDUFAF1. Interacts with ACAD9. Interacts with TRIM59. Interacts with TMEM70 and TMEM242. Interacts (when ubiquitinated) with NF-kappa-B subunits RELA and NFKB1. Interacts with RIGI, IFIT1 and MAVS; these interactions promote RLR-mediated type I IFN induction. Interacts with SQSTM1; this interaction inhibits TLR4 signaling via functional regulation of the TRAF6-ECSIT complex. Interacts with cereblon/CRBN; this interaction inhibits the ubiquitination of ECSIT. Post-translationally, ubiquitinated on Lys-371; leading to translocation in the nucleus together with RELA and NFKB1 and expression of NF-kappa-B-dependent genes.

The protein resides in the cytoplasm. The protein localises to the nucleus. It is found in the mitochondrion. Its function is as follows. Adapter protein that plays a role in different signaling pathways including TLRs and IL-1 pathways or innate antiviral induction signaling. Plays a role in the activation of NF-kappa-B by forming a signal complex with TRAF6 and TAK1/MAP3K7 to activate TAK1/MAP3K7 leading to activation of IKKs. Once ubiquitinated, interacts with the dissociated RELA and NFKB1 proteins and translocates to the nucleus where it induces NF-kappa-B-dependent gene expression. Plays a role in innate antiviral immune response by bridging the pattern recognition receptors RIGI and MDA5/IFIT1 to the MAVS complex at the mitochondrion. Promotes proteolytic activation of MAP3K1. Involved in the BMP signaling pathway. Required for normal embryonic development. Functionally, as part of the MCIA complex, involved in the assembly of the mitochondrial complex I. In Rattus norvegicus (Rat), this protein is Evolutionarily conserved signaling intermediate in Toll pathway, mitochondrial.